We begin with the raw amino-acid sequence, 298 residues long: tRNA pseudouridine synthase B (298 aa).

Aspartate 44 serves as the catalytic Nucleophile.

Belongs to the pseudouridine synthase TruB family. Type 1 subfamily.

It carries out the reaction uridine(55) in tRNA = pseudouridine(55) in tRNA. Its function is as follows. Responsible for synthesis of pseudouridine from uracil-55 in the psi GC loop of transfer RNAs. This Mycobacteroides abscessus (strain ATCC 19977 / DSM 44196 / CCUG 20993 / CIP 104536 / JCM 13569 / NCTC 13031 / TMC 1543 / L948) (Mycobacterium abscessus) protein is tRNA pseudouridine synthase B.